The sequence spans 195 residues: Large ribosomal subunit protein uL5 (195 aa).

This sequence belongs to the universal ribosomal protein uL5 family. In terms of assembly, part of the 50S ribosomal subunit; part of the 5S rRNA/L5/L18/L25 subcomplex. Contacts the 5S rRNA and the P site tRNA. Forms a bridge to the 30S subunit in the 70S ribosome.

Functionally, this is one of the proteins that bind and probably mediate the attachment of the 5S RNA into the large ribosomal subunit, where it forms part of the central protuberance. In the 70S ribosome it contacts protein S13 of the 30S subunit (bridge B1b), connecting the 2 subunits; this bridge is implicated in subunit movement. Contacts the P site tRNA; the 5S rRNA and some of its associated proteins might help stabilize positioning of ribosome-bound tRNAs. The polypeptide is Large ribosomal subunit protein uL5 (Chlorobium phaeobacteroides (strain DSM 266 / SMG 266 / 2430)).